Reading from the N-terminus, the 477-residue chain is Chaperonin GroEL 2 (477 aa).

Residues 29–32 (TLGP), 86–90 (DGTTT), and Gly-416 each bind ATP.

It belongs to the chaperonin (HSP60) family. As to quaternary structure, forms a cylinder of 14 subunits composed of two heptameric rings stacked back-to-back. Interacts with the co-chaperonin GroES.

The protein resides in the cytoplasm. The catalysed reaction is ATP + H2O + a folded polypeptide = ADP + phosphate + an unfolded polypeptide.. Functionally, together with its co-chaperonin GroES, plays an essential role in assisting protein folding. The GroEL-GroES system forms a nano-cage that allows encapsulation of the non-native substrate proteins and provides a physical environment optimized to promote and accelerate protein folding. The protein is Chaperonin GroEL 2 of Streptomyces lividans.